A 361-amino-acid chain; its full sequence is Phospho-N-acetylmuramoyl-pentapeptide-transferase (361 aa).

Helical transmembrane passes span 27–47 (GALFTAGLFVFWFGPWIISLL), 72–92 (TPTMGGLMILAGLLVAVFLWA), 99–119 (VWITVVVTLGFGAIGFYDDYL), 139–159 (ALIAVAACVAVAEYSAPGLAY), 169–189 (AIVNLGLFWIFFASFVIVGAG), 200–220 (GLAIVPVMIAAATFGIIAYLV), 240–260 (LAVVCGALIGAGLGFLWFNAP), 264–284 (IFMGDTGSLALGGLLGTVAVA), 289–309 (IVLAVVGGLFVLEIASVIIQV), and 338–358 (QVVIRFWIIAVVLALLGLATL).

This sequence belongs to the glycosyltransferase 4 family. MraY subfamily. It depends on Mg(2+) as a cofactor.

The protein localises to the cell inner membrane. It catalyses the reaction UDP-N-acetyl-alpha-D-muramoyl-L-alanyl-gamma-D-glutamyl-meso-2,6-diaminopimeloyl-D-alanyl-D-alanine + di-trans,octa-cis-undecaprenyl phosphate = di-trans,octa-cis-undecaprenyl diphospho-N-acetyl-alpha-D-muramoyl-L-alanyl-D-glutamyl-meso-2,6-diaminopimeloyl-D-alanyl-D-alanine + UMP. The protein operates within cell wall biogenesis; peptidoglycan biosynthesis. Functionally, catalyzes the initial step of the lipid cycle reactions in the biosynthesis of the cell wall peptidoglycan: transfers peptidoglycan precursor phospho-MurNAc-pentapeptide from UDP-MurNAc-pentapeptide onto the lipid carrier undecaprenyl phosphate, yielding undecaprenyl-pyrophosphoryl-MurNAc-pentapeptide, known as lipid I. The polypeptide is Phospho-N-acetylmuramoyl-pentapeptide-transferase (Methylobacterium sp. (strain 4-46)).